The primary structure comprises 305 residues: Superkiller complex protein 8 (305 aa).

N-acetylmethionine is present on M1. T2 bears the N-acetylthreonine; in WD repeat-containing protein 61, N-terminally processed mark. 7 WD repeats span residues 14–57, 62–101, 104–143, 146–187, 188–227, 230–269, and 272–305; these read AHDD…LELQ, GHQL…QMKS, AGPV…KEYS, TRGK…HTLE, GHAM…LAGT, GHAS…CIHT, and DHQD…DCPI.

The protein belongs to the SKI8 family. As to quaternary structure, component of the PAF1 complex, which consists of CDC73, PAF1, LEO1, CTR9, RTF1 and SKIC8. The PAF1 complex interacts with PHF5A. Within the PAF1 complex interacts directly with PHF5A. Component of the SKI complex which consists of SKIC2, SKIC3 and SKIC8.

The protein localises to the nucleus. The protein resides in the cytoplasm. In terms of biological role, component of the PAF1 complex (PAF1C) which has multiple functions during transcription by RNA polymerase II and is implicated in regulation of development and maintenance of embryonic stem cell pluripotency. PAF1C associates with RNA polymerase II through interaction with POLR2A CTD non-phosphorylated and 'Ser-2'- and 'Ser-5'-phosphorylated forms and is involved in transcriptional elongation, acting both independently and synergistically with TCEA1 and in cooperation with the DSIF complex and HTATSF1. PAF1C is required for transcription of Hox and Wnt target genes. PAF1C is involved in hematopoiesis and stimulates transcriptional activity of KMT2A/MLL1; it promotes leukemogenesis through association with KMT2A/MLL1-rearranged oncoproteins, such as KMT2A/MLL1-MLLT3/AF9 and KMT2A/MLL1-MLLT1/ENL. PAF1C is involved in histone modifications such as ubiquitination of histone H2B and methylation on histone H3 'Lys-4' (H3K4me3). PAF1C recruits the RNF20/40 E3 ubiquitin-protein ligase complex and the E2 enzyme UBE2A or UBE2B to chromatin which mediate monoubiquitination of 'Lys-120' of histone H2B (H2BK120ub1); UB2A/B-mediated H2B ubiquitination is proposed to be coupled to transcription. PAF1C is involved in mRNA 3' end formation probably through association with cleavage and poly(A) factors. In case of infection by influenza A strain H3N2, PAF1C associates with viral NS1 protein, thereby regulating gene transcription. Required for mono- and trimethylation on histone H3 'Lys-4' (H3K4me3), dimethylation on histone H3 'Lys-79' (H3K4me3). Required for Hox gene transcription. Also acts as a component of the SKI complex, a multiprotein complex that assists the RNA-degrading exosome during the mRNA decay and quality-control pathways. The SKI complex catalyzes mRNA extraction from 80S ribosomal complexes in the 3'-5' direction and channels mRNA to the cytosolic exosome for degradation. SKI-mediated extraction of mRNA from stalled ribosomes allow binding of the Pelota-HBS1L complex and subsequent ribosome disassembly by ABCE1 for ribosome recycling. This is Superkiller complex protein 8 (Skic8) from Mus musculus (Mouse).